The following is a 79-amino-acid chain: Anti-insect Ac4 (79 aa).

An N-terminal signal peptide occupies residues 1–17; the sequence is MISLSLLLMIGVESVRD. The 60-residue stretch at 18–77 folds into the LCN-type CS-alpha/beta domain; the sequence is GYIVDFKNCVYRCVPPCDGLCKKNGGKGGSCSFLIGSGLACWCNALPDNVPIKDPLHKCP. 4 cysteine pairs are disulfide-bonded: Cys-26/Cys-76, Cys-30/Cys-48, Cys-34/Cys-58, and Cys-38/Cys-60.

Belongs to the long (4 C-C) scorpion toxin superfamily. Sodium channel inhibitor family. Alpha subfamily. As to expression, expressed by the venom gland.

It is found in the secreted. Alpha toxins bind voltage-independently at site-3 of sodium channels (Nav) and inhibit the inactivation of the activated channels, thereby blocking neuronal transmission. This protein is weakly toxic against insects (ED(50)&gt;2 ug per 100 mg of blowfly larvae), but is inactive against mammalian sodium channels (rNav1.2a, and rNav1.4). This is Anti-insect Ac4 from Androctonus crassicauda (Arabian fat-tailed scorpion).